Here is a 602-residue protein sequence, read N- to C-terminus: Elongation factor 4 (602 aa).

The region spanning 2-184 (NHIRNFSIIA…LIVAKVPAPR (183 aa)) is the tr-type G domain. GTP-binding positions include 14–19 (DHGKST) and 131–134 (NKMD).

The protein belongs to the TRAFAC class translation factor GTPase superfamily. Classic translation factor GTPase family. LepA subfamily.

It localises to the cell inner membrane. It carries out the reaction GTP + H2O = GDP + phosphate + H(+). In terms of biological role, required for accurate and efficient protein synthesis under certain stress conditions. May act as a fidelity factor of the translation reaction, by catalyzing a one-codon backward translocation of tRNAs on improperly translocated ribosomes. Back-translocation proceeds from a post-translocation (POST) complex to a pre-translocation (PRE) complex, thus giving elongation factor G a second chance to translocate the tRNAs correctly. Binds to ribosomes in a GTP-dependent manner. This is Elongation factor 4 from Paracidovorax citrulli (strain AAC00-1) (Acidovorax citrulli).